Consider the following 805-residue polypeptide: Polycystin-2-like protein 1 (805 aa).

Residues 1 to 59 (MNAVGSPEGQELQKLGSGAWDNPAYSGPPSPHGTLRVCTISSTGPLQPQPKKPEDEPQE) form a disordered region. Topologically, residues 1 to 103 (MNAVGSPEGQ…ELYIKTTLRE (103 aa)) are cytoplasmic. Residue Cys-38 is the site of S-palmitoyl cysteine attachment. A helical membrane pass occupies residues 104–124 (LLVYIVFLVDICLLTYGMTSS). Topologically, residues 125-356 (SAYYYTKVMS…NWDFFIVGCE (232 aa)) are extracellular. N-linked (GlcNAc...) asparagine glycosylation is found at Asn-177 and Asn-207. A disulfide bridge links Cys-210 with Cys-223. Asn-241 carries an N-linked (GlcNAc...) asparagine glycan. The helical transmembrane segment at 357–376 (VIFCVFIFYYVVEEILELHI) threads the bilayer. Residues Glu-370 and Glu-373 each coordinate Ca(2+). Over 377–384 (HRLRYLSS) the chain is Cytoplasmic. A helical membrane pass occupies residues 385–405 (IWNILDLVVILLSIVAVGFHI). Residues Asn-387 and Asp-390 each coordinate Ca(2+). Residues 406 to 433 (FRTLEVNRLMGKLLQQPNTYADFEFLAF) are Extracellular-facing. A helical transmembrane segment spans residues 434–454 (WQTQYNNMNAVNLFFAWIKIF). Topologically, residues 455 to 479 (KYISFNKTMTQLSSTLARCAKDILG) are cytoplasmic. The helical transmembrane segment at 480–499 (FAVMFFIVFFAYAQLGYLLF) threads the bilayer. Topologically, residues 500 to 511 (GTQVENFSTFIK) are extracellular. Asn-505 is a glycosylation site (N-linked (GlcNAc...) asparagine). An intramembrane region (pore-forming) is located at residues 512–526 (CIFTQFRIILGDFDY). The Extracellular portion of the chain corresponds to 527 to 536 (NAIDNANRIL). Residues 537-557 (GPAYFVTYVFFVFFVLLNMFL) form a helical membrane-spanning segment. Over 558–805 (AIINDTYSEV…RGEIPTLQRS (248 aa)) the chain is Cytoplasmic. The EF-hand domain maps to 633 to 668 (HEITELTATFTKFDRDGNRILDEKEQEKMRQDLEEE). Coiled-coil stretches lie at residues 650 to 686 (NRILDEKEQEKMRQDLEEERVALNTEIEKLGRSIVSS) and 700 to 740 (GWVS…MLER). A required for homooligomerization region spans residues 704 to 763 (GEEFYMLTRRVLQLETVLEGVVSQIDAVGSKLKMLERKGWLAPSPGVKEQAIWKHPQPAP). The interval 759-805 (PQPAPAVTPDPWGVQGGQESEVPYKREEEALEERRLSRGEIPTLQRS) is disordered. Basic and acidic residues predominate over residues 780–796 (VPYKREEEALEERRLSR).

This sequence belongs to the polycystin family. As to quaternary structure, oligomer. Functional PKD2L1 homotetramer can be formed either through C-terminal trimerization followed by N-terminal dimerization of a fourth subunit with a subunit in the trimer or through dimerization followed by trimerization. Heterotetramer with either PKD1L1, PKD1L3 or PKD1; the heterotetrameric complex contains three PKD1L2 chains plus one chain from another family member. Interacts with PKD1L1, forming a ciliary calcium channel. Interacts with PKD1L3, forming a cation channel that is activated by low extracellular pH. Interacts with PKD1; this heteromeric functional cation channels is opened by hypo-osmotic stimulation. Interacts with RACK1; inhibits the channel activity possibly by impairing localization to the cell membrane. Post-translationally, palmitoylation is important for expression at the cell membrane and for channel activity. Detected in taste bud cells in fungiform papillae (at protein level). Ubiquitous. Expressed in adult heart, skeletal muscle, brain, spleen, testis, retina and liver. Isoform 4 appears to be expressed only in transformed lymphoblasts.

It is found in the cell projection. Its subcellular location is the cilium membrane. The protein resides in the cell membrane. The protein localises to the cytoplasmic vesicle. It catalyses the reaction Ca(2+)(in) = Ca(2+)(out). It carries out the reaction Na(+)(in) = Na(+)(out). The catalysed reaction is K(+)(in) = K(+)(out). The enzyme catalyses Mg(2+)(in) = Mg(2+)(out). The non-selective cation channel is gated following an off-response property by acid: gated open after the removal of acid stimulus, but not during acid application. Channel activity is inhibited by phosphatidylinositol-4,5-bisphosphate (PIP2). Non-selective cation channel activity is substantially increased when either the extracellular or intracellular calcium-ion concentration is raised. Regulation of non-selective cation channel activity by external calcium is bimodal, first sensitizing and subsequently inactivating the current. In terms of biological role, homotetrameric, non-selective cation channel that is permeable to sodium, potassium, magnesium and calcium. Also forms functionnal heteromeric channels with PKD1, PKD1L1 and PKD1L3. Pore-forming subunit of a heterotetrameric, non-selective cation channel, formed by PKD1L2 and PKD1L3, that is permeable to sodium, potassium, magnesium and calcium and which may act as a sour taste receptor in gustatory cells; however, its contribution to sour taste perception is unclear in vivo and may be indirect. The homomeric and heteromeric channels formed by PKD1L2 and PKD1L3 are activated by low pH and Ca(2+), but opens only when the extracellular pH rises again and after the removal of acid stimulus. Pore-forming subunit of a calcium-permeant ion channel formed by PKD1L2 and PKD1L1 in primary cilia, where it controls cilium calcium concentration, without affecting cytoplasmic calcium concentration, and regulates sonic hedgehog/SHH signaling and GLI2 transcription. The PKD1L1:PKD2L1 complex channel is mechanosensitive only at high pressures and is highly temperature sensitive. Pore-forming subunit of a calcium-permeant ion channel formed by PKD1L2 and PKD1 that produces a transient increase in intracellular calcium concentration upon hypo-osmotic stimulation (200 mOsm). May play a role in the perception of carbonation taste. May play a role in the sensory perception of water, via a mechanism that activates the channel in response to dilution of salivary bicarbonate and changes in salivary pH. This Homo sapiens (Human) protein is Polycystin-2-like protein 1.